The primary structure comprises 238 residues: Ditrans,polycis-undecaprenyl-diphosphate synthase ((2E,6E)-farnesyl-diphosphate specific) (238 aa).

The active site involves Asp14. A Mg(2+)-binding site is contributed by Asp14. Substrate contacts are provided by residues 15–18, Trp19, Arg27, His31, and 59–61; these read GNGR and SSE. Asn62 acts as the Proton acceptor in catalysis. Substrate contacts are provided by residues Trp63, Arg65, Arg182, and 188-190; that span reads RIS. Glu201 contacts Mg(2+).

Belongs to the UPP synthase family. Homodimer. Mg(2+) serves as cofactor.

It catalyses the reaction 8 isopentenyl diphosphate + (2E,6E)-farnesyl diphosphate = di-trans,octa-cis-undecaprenyl diphosphate + 8 diphosphate. Catalyzes the sequential condensation of isopentenyl diphosphate (IPP) with (2E,6E)-farnesyl diphosphate (E,E-FPP) to yield (2Z,6Z,10Z,14Z,18Z,22Z,26Z,30Z,34E,38E)-undecaprenyl diphosphate (di-trans,octa-cis-UPP). UPP is the precursor of glycosyl carrier lipid in the biosynthesis of bacterial cell wall polysaccharide components such as peptidoglycan and lipopolysaccharide. This chain is Ditrans,polycis-undecaprenyl-diphosphate synthase ((2E,6E)-farnesyl-diphosphate specific), found in Legionella pneumophila (strain Paris).